Reading from the N-terminus, the 404-residue chain is S-adenosylmethionine synthase (404 aa).

141 to 146 (GQGSVD) lines the ATP pocket.

Belongs to the AdoMet synthase 2 family. Mg(2+) serves as cofactor.

The enzyme catalyses L-methionine + ATP + H2O = S-adenosyl-L-methionine + phosphate + diphosphate. The protein operates within amino-acid biosynthesis; S-adenosyl-L-methionine biosynthesis; S-adenosyl-L-methionine from L-methionine: step 1/1. In terms of biological role, catalyzes the formation of S-adenosylmethionine from methionine and ATP. This chain is S-adenosylmethionine synthase, found in Methanococcus vannielii (strain ATCC 35089 / DSM 1224 / JCM 13029 / OCM 148 / SB).